The sequence spans 639 residues: CREB3 regulatory factor (639 aa).

Residues 302–422 (PLPQEGPGSL…SVEDLKEVTS (121 aa)) form a disordered region. Positions 310-328 (SLAAGESSSLSASTSVSDS) are enriched in low complexity. The segment covering 339-351 (LFVSDNLGEQPTK) has biased composition (polar residues). A compositionally biased stretch (acidic residues) spans 355 to 370 (EEDEEDEEDVDDEDHD). The span at 371–380 (EGFGSEHELS) shows a compositional bias: basic and acidic residues. The segment covering 381–401 (ENEEEEEEEEDYEDDKDDDIS) has biased composition (acidic residues). The bZIP domain maps to 521 to 584 (TARPRSRKEK…VNRVQNPRDE (64 aa)). Residues 523-532 (RPRSRKEKNK) form a basic motif region. Residues 533-540 (LASRACRL) form a leucine-zipper region.

This sequence belongs to the bZIP family. CREBRF subfamily. In terms of assembly, interacts (via leucine-zipper domain) with CREB3 (via leucine-zipper domain); the interaction promotes CREB3 degradation. Probably degraded by the proteasome.

The protein localises to the nucleus. Functionally, acts as a negative regulator of the endoplasmic reticulum stress response or unfolded protein response (UPR). Represses the transcriptional activity of CREB3 during the UPR. Recruits CREB3 into nuclear foci. In Homo sapiens (Human), this protein is CREB3 regulatory factor (CREBRF).